The sequence spans 137 residues: Phosphoribosyl-AMP cyclohydrolase (137 aa).

Asp-84 lines the Mg(2+) pocket. Residue Cys-85 participates in Zn(2+) binding. Mg(2+) is bound by residues Asp-86 and Asp-88. Positions 101 and 108 each coordinate Zn(2+).

This sequence belongs to the PRA-CH family. As to quaternary structure, homodimer. The cofactor is Mg(2+). Zn(2+) is required as a cofactor.

It localises to the cytoplasm. It carries out the reaction 1-(5-phospho-beta-D-ribosyl)-5'-AMP + H2O = 1-(5-phospho-beta-D-ribosyl)-5-[(5-phospho-beta-D-ribosylamino)methylideneamino]imidazole-4-carboxamide. It participates in amino-acid biosynthesis; L-histidine biosynthesis; L-histidine from 5-phospho-alpha-D-ribose 1-diphosphate: step 3/9. Catalyzes the hydrolysis of the adenine ring of phosphoribosyl-AMP. This Chlorobaculum parvum (strain DSM 263 / NCIMB 8327) (Chlorobium vibrioforme subsp. thiosulfatophilum) protein is Phosphoribosyl-AMP cyclohydrolase.